A 247-amino-acid chain; its full sequence is Triosephosphate isomerase (247 aa).

The substrate site is built by Asn-10 and Lys-12. The active-site Electrophile is His-94. The active-site Proton acceptor is Glu-164.

Belongs to the triosephosphate isomerase family. As to quaternary structure, homodimer.

It catalyses the reaction D-glyceraldehyde 3-phosphate = dihydroxyacetone phosphate. It participates in carbohydrate biosynthesis; gluconeogenesis. The protein operates within carbohydrate degradation; glycolysis; D-glyceraldehyde 3-phosphate from glycerone phosphate: step 1/1. This chain is Triosephosphate isomerase (Tpi), found in Drosophila melanogaster (Fruit fly).